The primary structure comprises 152 residues: SsrA-binding protein (152 aa).

Belongs to the SmpB family.

The protein resides in the cytoplasm. Required for rescue of stalled ribosomes mediated by trans-translation. Binds to transfer-messenger RNA (tmRNA), required for stable association of tmRNA with ribosomes. tmRNA and SmpB together mimic tRNA shape, replacing the anticodon stem-loop with SmpB. tmRNA is encoded by the ssrA gene; the 2 termini fold to resemble tRNA(Ala) and it encodes a 'tag peptide', a short internal open reading frame. During trans-translation Ala-aminoacylated tmRNA acts like a tRNA, entering the A-site of stalled ribosomes, displacing the stalled mRNA. The ribosome then switches to translate the ORF on the tmRNA; the nascent peptide is terminated with the 'tag peptide' encoded by the tmRNA and targeted for degradation. The ribosome is freed to recommence translation, which seems to be the essential function of trans-translation. The sequence is that of SsrA-binding protein from Rickettsia canadensis (strain McKiel).